Consider the following 305-residue polypeptide: Fe-S cluster assembly protein dre2 (305 aa).

The N-terminal SAM-like domain stretch occupies residues Asp21–Val150. The tract at residues Pro151–Leu195 is linker. [2Fe-2S] cluster is bound by residues Cys205, Cys217, Cys220, and Cys222. A fe-S binding site A region spans residues Cys205–Cys222. The [4Fe-4S] cluster site is built by Cys268, Cys271, Cys279, and Cys282. 2 consecutive short sequence motifs (cx2C motif) follow at residues Cys268 to Cys271 and Cys279 to Cys282. The segment at Cys268–Cys282 is fe-S binding site B.

Belongs to the anamorsin family. As to quaternary structure, monomer. Interacts with tah18. Interacts with mia40. Requires [2Fe-2S] cluster as cofactor. [4Fe-4S] cluster is required as a cofactor.

It localises to the cytoplasm. Its subcellular location is the mitochondrion intermembrane space. In terms of biological role, component of the cytosolic iron-sulfur (Fe-S) protein assembly (CIA) machinery required for the maturation of extramitochondrial Fe-S proteins. Part of an electron transfer chain functioning in an early step of cytosolic Fe-S biogenesis, facilitating the de novo assembly of a [4Fe-4S] cluster on the scaffold complex cfd1-nbp35. Electrons are transferred to dre2 from NADPH via the FAD- and FMN-containing protein tah18. Tah18-dre2 are also required for the assembly of the diferric tyrosyl radical cofactor of ribonucleotide reductase (RNR), probably by providing electrons for reduction during radical cofactor maturation in the catalytic small subunit rnr2. The chain is Fe-S cluster assembly protein dre2 from Talaromyces marneffei (strain ATCC 18224 / CBS 334.59 / QM 7333) (Penicillium marneffei).